Here is a 279-residue protein sequence, read N- to C-terminus: Bifunctional protein FolD (279 aa).

NADP(+) contacts are provided by residues 162 to 164 (GRS), Ser187, and Ile228.

This sequence belongs to the tetrahydrofolate dehydrogenase/cyclohydrolase family. Homodimer.

It catalyses the reaction (6R)-5,10-methylene-5,6,7,8-tetrahydrofolate + NADP(+) = (6R)-5,10-methenyltetrahydrofolate + NADPH. It carries out the reaction (6R)-5,10-methenyltetrahydrofolate + H2O = (6R)-10-formyltetrahydrofolate + H(+). It participates in one-carbon metabolism; tetrahydrofolate interconversion. Functionally, catalyzes the oxidation of 5,10-methylenetetrahydrofolate to 5,10-methenyltetrahydrofolate and then the hydrolysis of 5,10-methenyltetrahydrofolate to 10-formyltetrahydrofolate. This is Bifunctional protein FolD from Acidiphilium cryptum (strain JF-5).